A 362-amino-acid polypeptide reads, in one-letter code: Serine/threonine-protein kinase SBK2 (362 aa).

Basic and acidic residues predominate over residues 1–11 (MPGKQSEDKPM). A disordered region spans residues 1–26 (MPGKQSEDKPMEVSTVEDGGDEGLGG). One can recognise a Protein kinase domain in the interval 62–330 (YEEVRPLGQG…IKSYLGQPWK (269 aa)). ATP is bound by residues 68 to 76 (LGQGRFGRV) and K91. The active-site Proton acceptor is D183. Positions 329-362 (WKQREGEAEELATELREDGWRGGQEAAKGEQPAC) are disordered.

It belongs to the protein kinase superfamily. Ser/Thr protein kinase family. STKL subfamily.

It catalyses the reaction L-seryl-[protein] + ATP = O-phospho-L-seryl-[protein] + ADP + H(+). The enzyme catalyses L-threonyl-[protein] + ATP = O-phospho-L-threonyl-[protein] + ADP + H(+). This chain is Serine/threonine-protein kinase SBK2 (Sbk2), found in Mus musculus (Mouse).